The chain runs to 378 residues: S-adenosylmethionine:tRNA ribosyltransferase-isomerase (378 aa).

This sequence belongs to the QueA family. As to quaternary structure, monomer.

It is found in the cytoplasm. The enzyme catalyses 7-aminomethyl-7-carbaguanosine(34) in tRNA + S-adenosyl-L-methionine = epoxyqueuosine(34) in tRNA + adenine + L-methionine + 2 H(+). It functions in the pathway tRNA modification; tRNA-queuosine biosynthesis. Functionally, transfers and isomerizes the ribose moiety from AdoMet to the 7-aminomethyl group of 7-deazaguanine (preQ1-tRNA) to give epoxyqueuosine (oQ-tRNA). The sequence is that of S-adenosylmethionine:tRNA ribosyltransferase-isomerase from Prochlorococcus marinus (strain MIT 9312).